The chain runs to 194 residues: RNA polymerase II subunit A C-terminal domain phosphatase SSU72 like protein 1 (194 aa).

It belongs to the SSU72 phosphatase family.

The protein localises to the nucleus. It catalyses the reaction O-phospho-L-seryl-[protein] + H2O = L-seryl-[protein] + phosphate. It carries out the reaction O-phospho-L-threonyl-[protein] + H2O = L-threonyl-[protein] + phosphate. Functionally, protein phosphatase that catalyzes the dephosphorylation of the C-terminal domain of RNA polymerase II. Plays a role in RNA processing and termination. This is RNA polymerase II subunit A C-terminal domain phosphatase SSU72 like protein 1 from Homo sapiens (Human).